The sequence spans 211 residues: Protein crossbronx-like (211 aa).

A UBC core domain is found at N17–K177.

This sequence belongs to the ubiquitin-conjugating enzyme family. FTS subfamily.

The sequence is that of Protein crossbronx-like from Drosophila grimshawi (Hawaiian fruit fly).